The following is a 59-amino-acid chain: Large ribosomal subunit protein uL30 (59 aa).

The protein belongs to the universal ribosomal protein uL30 family. As to quaternary structure, part of the 50S ribosomal subunit.

In Herminiimonas arsenicoxydans, this protein is Large ribosomal subunit protein uL30.